The following is a 362-amino-acid chain: Chromobox protein homolog 8 (362 aa).

Residues 11–69 form the Chromo domain; the sequence is FAAEALLKRRIRKGRMEYLVKWKGWSQKYSTWEPEENILDARLLAAFEEREREMELYGP. Basic and acidic residues predominate over residues 90–100; the sequence is KTYEFRSDSTR. A disordered region spans residues 90-197; it reads KTYEFRSDST…LGEPSAGLGE (108 aa). Serine 110 is modified (phosphoserine). Residues 142-162 show a composition bias toward basic and acidic residues; the sequence is DPPRDRDRERDRGTSRVDDKP. Serine 164 and serine 229 each carry phosphoserine. Tyrosine 234 carries the phosphotyrosine modification. Phosphoserine is present on residues serine 238, serine 284, serine 305, and serine 325.

As to quaternary structure, component of a PRC1-like complex. Interacts with RING1, RNF2, PCGF1, PCGF2, PCGF3, BMI1, PCGF5, PCGF6 and PHC2. Interacts with histone H3. Interacts with MLLT3. Interacts with PHC2. Interacts (via chromodomain) with single-stranded RNA.

The protein localises to the nucleus. The protein resides in the chromosome. Component of a Polycomb group (PcG) multiprotein PRC1-like complex, a complex class required to maintain the transcriptionally repressive state of many genes, including Hox genes, throughout development. PcG PRC1 complex acts via chromatin remodeling and modification of histones; it mediates monoubiquitination of histone H2A 'Lys-119', rendering chromatin heritably changed in its expressibility. The protein is Chromobox protein homolog 8 (Cbx8) of Mus musculus (Mouse).